The following is a 140-amino-acid chain: Small ribosomal subunit protein uS12 (140 aa).

Residues 1 to 20 (MPTINQLVRKGRQSKVVKSD) are disordered. At Asp102 the chain carries 3-methylthioaspartic acid. The disordered stretch occupies residues 121–140 (DGRMQGRSKYGTKRPKAAKK). Over residues 130 to 140 (YGTKRPKAAKK) the composition is skewed to basic residues.

Belongs to the universal ribosomal protein uS12 family. In terms of assembly, part of the 30S ribosomal subunit. Contacts proteins S8 and S17. May interact with IF1 in the 30S initiation complex.

In terms of biological role, with S4 and S5 plays an important role in translational accuracy. Its function is as follows. Interacts with and stabilizes bases of the 16S rRNA that are involved in tRNA selection in the A site and with the mRNA backbone. Located at the interface of the 30S and 50S subunits, it traverses the body of the 30S subunit contacting proteins on the other side and probably holding the rRNA structure together. The combined cluster of proteins S8, S12 and S17 appears to hold together the shoulder and platform of the 30S subunit. The protein is Small ribosomal subunit protein uS12 of Exiguobacterium sibiricum (strain DSM 17290 / CCUG 55495 / CIP 109462 / JCM 13490 / 255-15).